Reading from the N-terminus, the 120-residue chain is NAD(P)H-quinone oxidoreductase subunit 3, chloroplastic (120 aa).

3 consecutive transmembrane segments (helical) span residues Ile9–Gly29, Met64–Met84, and Val88–Leu108.

This sequence belongs to the complex I subunit 3 family. NDH is composed of at least 16 different subunits, 5 of which are encoded in the nucleus.

The protein localises to the plastid. It localises to the chloroplast thylakoid membrane. The enzyme catalyses a plastoquinone + NADH + (n+1) H(+)(in) = a plastoquinol + NAD(+) + n H(+)(out). It carries out the reaction a plastoquinone + NADPH + (n+1) H(+)(in) = a plastoquinol + NADP(+) + n H(+)(out). In terms of biological role, NDH shuttles electrons from NAD(P)H:plastoquinone, via FMN and iron-sulfur (Fe-S) centers, to quinones in the photosynthetic chain and possibly in a chloroplast respiratory chain. The immediate electron acceptor for the enzyme in this species is believed to be plastoquinone. Couples the redox reaction to proton translocation, and thus conserves the redox energy in a proton gradient. The polypeptide is NAD(P)H-quinone oxidoreductase subunit 3, chloroplastic (Cucumis sativus (Cucumber)).